We begin with the raw amino-acid sequence, 638 residues long: Paramyosin (638 aa).

The stretch at 1–638 (FSPSTTRLES…EGDISVMQAD (638 aa)) forms a coiled coil.

Belongs to the paramyosin family. Homodimer.

The protein localises to the cytoplasm. It is found in the myofibril. In terms of biological role, paramyosin is a major structural component of many thick filaments isolated from invertebrate muscles. This Opisthorchis felineus protein is Paramyosin.